Here is a 185-residue protein sequence, read N- to C-terminus: Ribosome-recycling factor (185 aa).

Belongs to the RRF family.

It localises to the cytoplasm. Responsible for the release of ribosomes from messenger RNA at the termination of protein biosynthesis. May increase the efficiency of translation by recycling ribosomes from one round of translation to another. In Pectobacterium carotovorum subsp. carotovorum (strain PC1), this protein is Ribosome-recycling factor.